Reading from the N-terminus, the 760-residue chain is 5-methyltetrahydropteroyltriglutamate--homocysteine methyltransferase (760 aa).

Residues 24-27 and lysine 118 contribute to the 5-methyltetrahydropteroyltri-L-glutamate site; that span reads RELK. Residues 437-439 and glutamate 490 contribute to the L-homocysteine site; that span reads IGS. Residues 437 to 439 and glutamate 490 each bind L-methionine; that span reads IGS. Residues 521-522 and tryptophan 567 each bind 5-methyltetrahydropteroyltri-L-glutamate; that span reads RC. Aspartate 605 contacts L-homocysteine. Aspartate 605 provides a ligand contact to L-methionine. Position 611 (glutamate 611) interacts with 5-methyltetrahydropteroyltri-L-glutamate. Positions 647, 649, and 671 each coordinate Zn(2+). The active-site Proton donor is histidine 700. Position 732 (cysteine 732) interacts with Zn(2+).

Belongs to the vitamin-B12 independent methionine synthase family. Zn(2+) serves as cofactor.

It catalyses the reaction 5-methyltetrahydropteroyltri-L-glutamate + L-homocysteine = tetrahydropteroyltri-L-glutamate + L-methionine. The protein operates within amino-acid biosynthesis; L-methionine biosynthesis via de novo pathway; L-methionine from L-homocysteine (MetE route): step 1/1. Catalyzes the transfer of a methyl group from 5-methyltetrahydrofolate to homocysteine resulting in methionine formation. The polypeptide is 5-methyltetrahydropteroyltriglutamate--homocysteine methyltransferase (Mycobacterium leprae (strain TN)).